A 116-amino-acid chain; its full sequence is Large ribosomal subunit protein bL17 (116 aa).

It belongs to the bacterial ribosomal protein bL17 family. In terms of assembly, part of the 50S ribosomal subunit. Contacts protein L32.

The polypeptide is Large ribosomal subunit protein bL17 (Parasynechococcus marenigrum (strain WH8102)).